A 77-amino-acid polypeptide reads, in one-letter code: Conotoxin ArMKLT2-0122 (77 aa).

Residues 1–22 form the signal peptide; that stretch reads MKLTCVLIVAVLFLTACQLIAA. Residues 23-44 constitute a propeptide that is removed on maturation; it reads DDSRDLKRFSRRKMRDGMLNTK. Intrachain disulfides connect Cys50–Cys65, Cys57–Cys68, and Cys64–Cys73.

It belongs to the conotoxin O1 superfamily. In terms of tissue distribution, expressed by the venom duct.

The protein resides in the secreted. The polypeptide is Conotoxin ArMKLT2-0122 (Conus arenatus (Sand-dusted cone)).